Reading from the N-terminus, the 513-residue chain is Probable DNA primase large subunit (513 aa).

Positions 315, 398, 415, and 457 each coordinate [4Fe-4S] cluster.

Belongs to the eukaryotic-type primase large subunit family. Heterodimer of a small subunit and a large subunit. Requires [4Fe-4S] cluster as cofactor.

Its function is as follows. DNA primase is the polymerase that synthesizes small RNA primers for the Okazaki fragments made during discontinuous DNA replication. In Neurospora crassa (strain ATCC 24698 / 74-OR23-1A / CBS 708.71 / DSM 1257 / FGSC 987), this protein is Probable DNA primase large subunit.